Consider the following 598-residue polypeptide: Pantothenate kinase 1 (598 aa).

The tract at residues 32 to 161 (ARPGDQGKAG…SPGAPVGTSA (130 aa)) is disordered. A compositionally biased stretch (gly residues) spans 38–49 (GKAGGGSPGWGC). Serine 215 bears the Phosphoserine mark. A Nucleolar localization signal motif is present at residues 218–235 (KKCRLRRRMDSGRKNRPP). The Proton acceptor role is filled by glutamate 363. Residues serine 417, serine 420, and arginine 432 each contribute to the acetyl-CoA site.

The protein belongs to the type II pantothenate kinase family. In terms of assembly, homodimer. In terms of tissue distribution, expressed at high levels in brain, heart, kidney, liver, skeletal muscle and testis. Detected at much lower levels in kidney, liver, brain and testis and not detected in heart or skeletal muscle.

Its subcellular location is the cytoplasm. It is found in the nucleus. The protein resides in the nucleolus. The protein localises to the cytosol. It localises to the cytoplasmic vesicle. Its subcellular location is the clathrin-coated vesicle. It is found in the recycling endosome. It catalyses the reaction (R)-pantothenate + ATP = (R)-4'-phosphopantothenate + ADP + H(+). It functions in the pathway cofactor biosynthesis; coenzyme A biosynthesis; CoA from (R)-pantothenate: step 1/5. With respect to regulation, regulated by feedback inhibition by CoA and its thioesters. Functionally, catalyzes the phosphorylation of pantothenate to generate 4'-phosphopantothenate in the first and rate-determining step of coenzyme A (CoA) synthesis. The sequence is that of Pantothenate kinase 1 (PANK1) from Homo sapiens (Human).